The primary structure comprises 479 residues: DNA polymerase IV (479 aa).

The region spanning 7-189 (ILHLDMDAFF…MTVRTLPGVG (183 aa)) is the UmuC domain. The Mg(2+) site is built by Asp11 and Asp105. Glu106 is a catalytic residue. Disordered stretches follow at residues 357–400 (AGDR…GHGW) and 430–479 (DPEL…TSRP). Basic and acidic residues predominate over residues 381-396 (AERRWPSGHDVRHTEL).

This sequence belongs to the DNA polymerase type-Y family. As to quaternary structure, monomer. Mg(2+) is required as a cofactor.

Its subcellular location is the cytoplasm. The catalysed reaction is DNA(n) + a 2'-deoxyribonucleoside 5'-triphosphate = DNA(n+1) + diphosphate. Poorly processive, error-prone DNA polymerase involved in untargeted mutagenesis. Copies undamaged DNA at stalled replication forks, which arise in vivo from mismatched or misaligned primer ends. These misaligned primers can be extended by PolIV. Exhibits no 3'-5' exonuclease (proofreading) activity. May be involved in translesional synthesis, in conjunction with the beta clamp from PolIII. The protein is DNA polymerase IV of Streptomyces coelicolor (strain ATCC BAA-471 / A3(2) / M145).